A 323-amino-acid chain; its full sequence is tRNA dimethylallyltransferase (323 aa).

12-19 provides a ligand contact to ATP; that stretch reads GPTAAGKT. Residue 14 to 19 participates in substrate binding; sequence TAAGKT. 2 interaction with substrate tRNA regions span residues 37–40 and 161–165; these read DSAL and QRLIR.

This sequence belongs to the IPP transferase family. Monomer. Mg(2+) serves as cofactor.

The enzyme catalyses adenosine(37) in tRNA + dimethylallyl diphosphate = N(6)-dimethylallyladenosine(37) in tRNA + diphosphate. Functionally, catalyzes the transfer of a dimethylallyl group onto the adenine at position 37 in tRNAs that read codons beginning with uridine, leading to the formation of N6-(dimethylallyl)adenosine (i(6)A). This Pseudomonas entomophila (strain L48) protein is tRNA dimethylallyltransferase.